The sequence spans 417 residues: Methyltransferase/ribosomally synthesized cyclic peptide omphalotin A precursor ophMA (417 aa).

The methyltransferase domain stretch occupies residues 1 to 251 (METSTQTKAG…GVSTFYIPPK (251 aa)). Active-site residues include arginine 72, tyrosine 76, and tyrosine 98. The S-adenosyl-L-methionine site is built by tyrosine 98, histidine 100, valine 103, alanine 130, glutamine 172, alanine 213, serine 244, and threonine 245. Residues 252–378 (ARKASNLDII…WAIRCAMKNM (127 aa)) are clasp domain. The tract at residues 379 to 399 (PSSLLDAARESGEEASQNGFP) is precursor leader. N-methylvaline is present on residues valine 401, valine 403, and valine 404. Glycine 405 is modified (N-methylglycine). Valine 406 is subject to N-methylvaline. Isoleucine 407 bears the N-methylisoleucine mark. Glycine 408 bears the N-methylglycine mark. Isoleucine 410 carries the post-translational modification N-methylisoleucine. The residue at position 411 (glycine 411) is an N-methylglycine. Residue valine 413 is modified to N-methylvaline.

This sequence in the N-terminal section; belongs to the precorrin methyltransferase family. As to quaternary structure, homodimer. OphMA automethylates at Val-401, Val-403, Val-404, Gly-405, Val-406, Ile-407, Gly-408, Ile-410, Gly-411 and Val-413 before being processed by the prolyloligopeptidase ophP which likely forms a peptidyl ester upon removal of the follower propeptide, which then undergoes macrocyclization with the N-terminus of the modified core peptide. Peptide backbone alpha-N-methylations change the physicochemical properties of amide bonds to provide structural constraints and other favorable characteristics including biological membrane permeability to peptides.

Its pathway is mycotoxin biosynthesis. Fusion protein of the methyltransferase ophM and the omphalotin core peptide; part of the gene cluster that mediates the biosynthesis of omphalotin A, a highly methylated cyclic dodecapeptide with nematodicidal activity. Omphalotin A derives from the C-terminus of the ophMA protein, and it is the ophMA protein that methylates its own C-terminus using S-adenosyl methionine (SAM). The C-terminus is subsequently cleaved off and macrocyclized by the prolyloligopeptidase ophP to give the final product. This is Methyltransferase/ribosomally synthesized cyclic peptide omphalotin A precursor ophMA from Omphalotus olearius (Jack o'lantern).